A 741-amino-acid chain; its full sequence is 1,4-alpha-glucan branching enzyme GlgB (741 aa).

Catalysis depends on aspartate 420, which acts as the Nucleophile. Catalysis depends on glutamate 473, which acts as the Proton donor.

It belongs to the glycosyl hydrolase 13 family. GlgB subfamily. As to quaternary structure, monomer.

It carries out the reaction Transfers a segment of a (1-&gt;4)-alpha-D-glucan chain to a primary hydroxy group in a similar glucan chain.. The protein operates within glycan biosynthesis; glycogen biosynthesis. Its function is as follows. Catalyzes the formation of the alpha-1,6-glucosidic linkages in glycogen by scission of a 1,4-alpha-linked oligosaccharide from growing alpha-1,4-glucan chains and the subsequent attachment of the oligosaccharide to the alpha-1,6 position. The protein is 1,4-alpha-glucan branching enzyme GlgB of Pseudomonas syringae pv. tomato (strain ATCC BAA-871 / DC3000).